A 377-amino-acid chain; its full sequence is Prostaglandin reductase-3 (377 aa).

K35 carries the post-translational modification N6-acetyllysine. T185, S205, K209, Y224, S247, I269, and Y275 together coordinate NADP(+). S299 carries the post-translational modification Phosphoserine. NADP(+) is bound by residues 303 to 305 and N361; that span reads FFL.

The protein belongs to the zinc-containing alcohol dehydrogenase family. Quinone oxidoreductase subfamily. As to expression, widely expressed.

The protein localises to the peroxisome. The enzyme catalyses 13,14-dihydro-15-oxo-prostaglandin E2 + NADP(+) = 15-oxoprostaglandin E2 + NADPH + H(+). It catalyses the reaction 13,14-dihydro-15-oxo-prostaglandin E1 + NADP(+) = 15-oxoprostaglandin E1 + NADPH + H(+). The catalysed reaction is 13,14-dihydro-15-oxo-PGF2alpha + NADP(+) = 15-oxoprostaglandin F2alpha + NADPH + H(+). It carries out the reaction 13,14-dihydro-15-oxo-prostaglandin F1alpha + NADP(+) = 15-oxoprostaglandin F1alpha + NADPH + H(+). Functions as 15-oxo-prostaglandin 13-reductase and acts on 15-keto-PGE1, 15-keto-PGE2, 15-keto-PGE1-alpha and 15-keto-PGE2-alpha with highest efficiency towards 15-keto-PGE2-alpha. Overexpression represses transcriptional activity of PPARG and inhibits adipocyte differentiation. The protein is Prostaglandin reductase-3 of Mus musculus (Mouse).